We begin with the raw amino-acid sequence, 316 residues long: Retron Ec73 putative ribosyltransferase/DNA-binding protein (316 aa).

In terms of biological role, possible ribosyltransferase/DNA-binding component of antiviral defense system retron Ec73, composed of a non-coding RNA (ncRNA) followed by this protein then a reverse transcriptase (RT). Expression of this retron confers protection against bacteriophages SECphi4, SECphi6, SECphi27 and P1. At multiplicity of infection (MOI) of 0.02 cultures grow normally when infected with SECphi4 without collapsing, at MOI 2 cultures enter growth stasis. This Escherichia coli protein is Retron Ec73 putative ribosyltransferase/DNA-binding protein.